The sequence spans 314 residues: Ferredoxin:CoB-CoM heterodisulfide reductase subunit B (314 aa).

This sequence belongs to the HdrB family. The ferredoxin:CoB-CoM heterodisulfide reductase is composed of three subunits; HdrA1, HdrB1 and HdrC1. [4Fe-4S] cluster serves as cofactor.

Its subcellular location is the cytoplasm. It catalyses the reaction coenzyme B + coenzyme M + 2 oxidized [2Fe-2S]-[ferredoxin] = coenzyme M-coenzyme B heterodisulfide + 2 reduced [2Fe-2S]-[ferredoxin] + 2 H(+). It functions in the pathway cofactor metabolism; coenzyme M-coenzyme B heterodisulfide reduction; coenzyme B and coenzyme M from coenzyme M-coenzyme B heterodisulfide: step 1/1. Its function is as follows. Part of a complex that catalyzes the reversible reduction of CoM-S-S-CoB to the thiol-coenzymes H-S-CoM (coenzyme M) and H-S-CoB (coenzyme B). Probably involved in methylotrophic methanogenesis but not in aceticlastic methanogenesis. This chain is Ferredoxin:CoB-CoM heterodisulfide reductase subunit B, found in Methanosarcina acetivorans (strain ATCC 35395 / DSM 2834 / JCM 12185 / C2A).